The primary structure comprises 61 residues: Small ribosomal subunit protein uS14B (61 aa).

Residues cysteine 24, cysteine 27, cysteine 40, and cysteine 43 each contribute to the Zn(2+) site.

This sequence belongs to the universal ribosomal protein uS14 family. Zinc-binding uS14 subfamily. Part of the 30S ribosomal subunit. Contacts proteins S3 and S10. Requires Zn(2+) as cofactor.

Binds 16S rRNA, required for the assembly of 30S particles and may also be responsible for determining the conformation of the 16S rRNA at the A site. In Mycobacterium ulcerans (strain Agy99), this protein is Small ribosomal subunit protein uS14B.